Here is a 963-residue protein sequence, read N- to C-terminus: Protein translocase subunit SecA (963 aa).

Residues glutamine 87, 105–109 (GEGKT), and aspartate 524 each bind ATP. Cysteine 946, cysteine 948, cysteine 957, and histidine 958 together coordinate Zn(2+).

It belongs to the SecA family. Monomer and homodimer. Part of the essential Sec protein translocation apparatus which comprises SecA, SecYEG and auxiliary proteins SecDF-YajC and YidC. The cofactor is Zn(2+).

Its subcellular location is the cell inner membrane. The protein resides in the cytoplasm. The enzyme catalyses ATP + H2O + cellular proteinSide 1 = ADP + phosphate + cellular proteinSide 2.. In terms of biological role, part of the Sec protein translocase complex. Interacts with the SecYEG preprotein conducting channel. Has a central role in coupling the hydrolysis of ATP to the transfer of proteins into and across the cell membrane, serving both as a receptor for the preprotein-SecB complex and as an ATP-driven molecular motor driving the stepwise translocation of polypeptide chains across the membrane. The protein is Protein translocase subunit SecA of Methylobacterium radiotolerans (strain ATCC 27329 / DSM 1819 / JCM 2831 / NBRC 15690 / NCIMB 10815 / 0-1).